Consider the following 471-residue polypeptide: Ribulose bisphosphate carboxylase large chain (471 aa).

Residues Asn-115 and Thr-165 each contribute to the substrate site. The active-site Proton acceptor is the Lys-167. Lys-169 is a binding site for substrate. The Mg(2+) site is built by Lys-193, Asp-195, and Glu-196. Lys-193 bears the N6-carboxylysine mark. The active-site Proton acceptor is His-286. Positions 287, 319, and 371 each coordinate substrate.

It belongs to the RuBisCO large chain family. Type I subfamily. In terms of assembly, heterohexadecamer of 8 large chains and 8 small chains. Mg(2+) is required as a cofactor.

It localises to the carboxysome. It carries out the reaction 2 (2R)-3-phosphoglycerate + 2 H(+) = D-ribulose 1,5-bisphosphate + CO2 + H2O. The enzyme catalyses D-ribulose 1,5-bisphosphate + O2 = 2-phosphoglycolate + (2R)-3-phosphoglycerate + 2 H(+). RuBisCO catalyzes two reactions: the carboxylation of D-ribulose 1,5-bisphosphate, the primary event in carbon dioxide fixation, as well as the oxidative fragmentation of the pentose substrate in the photorespiration process. Both reactions occur simultaneously and in competition at the same active site. The sequence is that of Ribulose bisphosphate carboxylase large chain from Synechococcus sp. (strain RCC307).